We begin with the raw amino-acid sequence, 1563 residues long: Pentafunctional AROM polypeptide (1563 aa).

The tract at residues 1 to 382 (MAESSSNPTR…YEPKASVVED (382 aa)) is 3-dehydroquinate synthase. Residues 48 to 50 (DTN), 82 to 85 (EYSK), 113 to 115 (GGV), and aspartate 118 contribute to the NAD(+) site. Arginine 129 is a 7-phospho-2-dehydro-3-deoxy-D-arabino-heptonate binding site. 138–139 (TT) is a binding site for NAD(+). Positions 145 and 151 each coordinate 7-phospho-2-dehydro-3-deoxy-D-arabino-heptonate. NAD(+) is bound at residue lysine 160. Asparagine 161 contacts 7-phospho-2-dehydro-3-deoxy-D-arabino-heptonate. Residues 178–181 (FLNT) and asparagine 189 contribute to the NAD(+) site. Glutamate 193 provides a ligand contact to Zn(2+). 7-phospho-2-dehydro-3-deoxy-D-arabino-heptonate-binding positions include 193–196 (EVIK) and lysine 248. The active-site Proton acceptor; for 3-dehydroquinate synthase activity is the glutamate 258. Residues 262-266 (RNLLN) and histidine 269 contribute to the 7-phospho-2-dehydro-3-deoxy-D-arabino-heptonate site. Histidine 269 is a Zn(2+) binding site. Residue histidine 273 is the Proton acceptor; for 3-dehydroquinate synthase activity of the active site. 2 residues coordinate 7-phospho-2-dehydro-3-deoxy-D-arabino-heptonate: histidine 285 and lysine 354. A Zn(2+)-binding site is contributed by histidine 285. Positions 395–834 (VHAGVPKDLK…WDTMSNYFKS (440 aa)) are EPSP synthase. Cysteine 816 (for EPSP synthase activity) is an active-site residue. Residues 836-850 (LEGEEEPHSSHVSHE) show a composition bias toward basic and acidic residues. The tract at residues 836-857 (LEGEEEPHSSHVSHEKPRKGNP) is disordered. The tract at residues 857–1051 (PKSIFIIGMR…KKKPQSSFVS (195 aa)) is shikimate kinase. ATP is bound at residue 864-871 (GMRGAGKS). The segment at 1052–1265 (LTVPNVSKAL…AAPGQLSAAE (214 aa)) is 3-dehydroquinase. Catalysis depends on histidine 1168, which acts as the Proton acceptor; for 3-dehydroquinate dehydratase activity. The active-site Schiff-base intermediate with substrate; for 3-dehydroquinate dehydratase activity is the lysine 1196. The tract at residues 1278 to 1563 (PRSFYLFGKP…TDAQAAVMGN (286 aa)) is shikimate dehydrogenase.

This sequence in the N-terminal section; belongs to the sugar phosphate cyclases superfamily. Dehydroquinate synthase family. It in the 2nd section; belongs to the EPSP synthase family. The protein in the 3rd section; belongs to the shikimate kinase family. In the 4th section; belongs to the type-I 3-dehydroquinase family. This sequence in the C-terminal section; belongs to the shikimate dehydrogenase family. In terms of assembly, homodimer. It depends on Zn(2+) as a cofactor.

It localises to the cytoplasm. The catalysed reaction is 7-phospho-2-dehydro-3-deoxy-D-arabino-heptonate = 3-dehydroquinate + phosphate. The enzyme catalyses 3-dehydroquinate = 3-dehydroshikimate + H2O. It carries out the reaction shikimate + NADP(+) = 3-dehydroshikimate + NADPH + H(+). It catalyses the reaction shikimate + ATP = 3-phosphoshikimate + ADP + H(+). The catalysed reaction is 3-phosphoshikimate + phosphoenolpyruvate = 5-O-(1-carboxyvinyl)-3-phosphoshikimate + phosphate. It participates in metabolic intermediate biosynthesis; chorismate biosynthesis; chorismate from D-erythrose 4-phosphate and phosphoenolpyruvate: step 2/7. Its pathway is metabolic intermediate biosynthesis; chorismate biosynthesis; chorismate from D-erythrose 4-phosphate and phosphoenolpyruvate: step 3/7. It functions in the pathway metabolic intermediate biosynthesis; chorismate biosynthesis; chorismate from D-erythrose 4-phosphate and phosphoenolpyruvate: step 4/7. The protein operates within metabolic intermediate biosynthesis; chorismate biosynthesis; chorismate from D-erythrose 4-phosphate and phosphoenolpyruvate: step 5/7. It participates in metabolic intermediate biosynthesis; chorismate biosynthesis; chorismate from D-erythrose 4-phosphate and phosphoenolpyruvate: step 6/7. Functionally, the AROM polypeptide catalyzes 5 consecutive enzymatic reactions in prechorismate polyaromatic amino acid biosynthesis. In Sordaria macrospora (strain ATCC MYA-333 / DSM 997 / K(L3346) / K-hell), this protein is Pentafunctional AROM polypeptide.